The following is a 970-amino-acid chain: uncharacterized protein (970 aa).

The segment at 942–970 (QLSFEEDGWTESEPRPVRREAHVRAKERH) is disordered. The span at 953–970 (SEPRPVRREAHVRAKERH) shows a compositional bias: basic and acidic residues.

This is an uncharacterized protein from Frog virus 3 (isolate Goorha) (FV-3).